Reading from the N-terminus, the 481-residue chain is uncharacterized protein (481 aa).

It to M.tuberculosis RV2411c.

This is an uncharacterized protein from Synechocystis sp. (strain ATCC 27184 / PCC 6803 / Kazusa).